We begin with the raw amino-acid sequence, 192 residues long: Peptidyl-tRNA hydrolase (192 aa).

A tRNA-binding site is contributed by Y17. Residue H22 is the Proton acceptor of the active site. Residues F68, N70, and N116 each coordinate tRNA.

This sequence belongs to the PTH family. As to quaternary structure, monomer.

The protein localises to the cytoplasm. It carries out the reaction an N-acyl-L-alpha-aminoacyl-tRNA + H2O = an N-acyl-L-amino acid + a tRNA + H(+). Functionally, hydrolyzes ribosome-free peptidyl-tRNAs (with 1 or more amino acids incorporated), which drop off the ribosome during protein synthesis, or as a result of ribosome stalling. In terms of biological role, catalyzes the release of premature peptidyl moieties from peptidyl-tRNA molecules trapped in stalled 50S ribosomal subunits, and thus maintains levels of free tRNAs and 50S ribosomes. This chain is Peptidyl-tRNA hydrolase, found in Hydrogenovibrio crunogenus (strain DSM 25203 / XCL-2) (Thiomicrospira crunogena).